A 571-amino-acid chain; its full sequence is uncharacterized protein (571 aa).

Transmembrane regions (helical) follow at residues 10–29, 36–55, 65–87, 96–118, and 166–188; these read VRLHPELALFAAIVFGHFIG, VSLGTVVGTLIAGMILGLLF, WAFFDLFLFAVGYSAGPQFFASL, ALAVVVSCTGLAAAIAMVALFRF, and ATTYIFGEVGLILFVTVVAPRLL. The region spanning 294-378 is the RCK C-terminal domain; it reads TEVDDQELLS…IATAARNLGF (85 aa). A run of 6 helical transmembrane segments spans residues 388–406, 411–433, 446–465, 480–502, 509–531, and 546–568; these read LVYLAGGVVVGILFGLLQV, VPLGLGTSGGVLVVGLVAGWLYS, LRLLSDVGLIVFIAAIGLAA, LFAKLVGAGVVVTLAGPIAGLLL, LPPVALLPGIAGAQTTVATLNAL, and VPFAVSNVLITLWGPVIVACAVA.

It belongs to the AAE transporter (TC 2.A.81) family.

The protein resides in the cell membrane. This is an uncharacterized protein from Bordetella parapertussis (strain 12822 / ATCC BAA-587 / NCTC 13253).